The following is a 1034-amino-acid chain: Vacuolar membrane protease (1034 aa).

Over 1 to 11 the chain is Cytoplasmic; the sequence is MAVKNPFGFTT. Residues 12-32 form a helical membrane-spanning segment; that stretch reads GPVTFWLIVVYAAFLIPLVWI. At 33–418 the chain is on the vacuolar side; it reads HESVPAVPSS…GFAILELRGL (386 aa). N51 and N141 each carry an N-linked (GlcNAc...) asparagine glycan. Zn(2+) is bound by residues H200 and D212. The active-site Proton acceptor is E246. E247, E272, and H345 together coordinate Zn(2+). Residues 419-439 traverse the membrane as a helical segment; sequence FAWTLTLLIVSPLVLALVTYI. Residues 440–470 are Cytoplasmic-facing; it reads LSRKDKYYFFSRKVTADEDDEPVSVGGWKGF. The helical transmembrane segment at 471–491 threads the bilayer; sequence FRFPFALVLSASITVLSAFLI. The Vacuolar portion of the chain corresponds to 492 to 497; the sequence is RRVNPH. A helical transmembrane segment spans residues 498 to 518; sequence IIYSSPYAVWAMTLSLFFLVF. Topologically, residues 519–536 are cytoplasmic; sequence WTIAKGASVVRPSALQRG. The chain crosses the membrane as a helical span at residues 537–557; it reads YAHIWLFVISWVILVAVTAAA. At 558–567 the chain is on the vacuolar side; the sequence is DRFKIASGYP. A helical membrane pass occupies residues 568–588; sequence FAFFHSAVFVSALISLCDLFA. At 589–703 the chain is on the cytoplasmic side; the sequence is LPSKQEFARN…NLPSWTWFFQ (115 aa). Positions 623–653 are disordered; that stretch reads HSHVEDDVAEEPTETTPLRSGENGNGNNGTI. Residues 704–724 traverse the membrane as a helical segment; the sequence is LLLLAPITITVFLQIALFIVS. Residues 725–736 lie on the Vacuolar side of the membrane; it reads AIHSAAADGNDP. A helical membrane pass occupies residues 737 to 757; the sequence is ILVYAAIAAFSIIILLPATPF. At 758–762 the chain is on the cytoplasmic side; that stretch reads IHRAS. Residues 763–783 traverse the membrane as a helical segment; sequence FYLPLFLLLVFFVTLIYNLVA. At 784 to 1034 the chain is on the vacuolar side; that stretch reads FPFSAENRLK…LVEGRKKFRA (251 aa). 3 N-linked (GlcNAc...) asparagine glycosylation sites follow: N805, N866, and N879.

It belongs to the peptidase M28 family. Zn(2+) is required as a cofactor.

The protein resides in the vacuole membrane. In terms of biological role, may be involved in vacuolar sorting and osmoregulation. This is Vacuolar membrane protease from Colletotrichum graminicola (strain M1.001 / M2 / FGSC 10212) (Maize anthracnose fungus).